We begin with the raw amino-acid sequence, 355 residues long: MHC class I-like protein MILL2 (355 aa).

The first 29 residues, 1 to 29 (MKASSGKPREFRPAVLLLILGLLLRDSRG), serve as a signal peptide directing secretion. The interval 46 to 137 (RLTRTHTLRY…VINQKSQEEG (92 aa)) is alpha-1. 3 disulfide bridges follow: Cys96/Cys107, Cys147/Cys210, and Cys249/Cys306. N-linked (GlcNAc...) asparagine glycans are attached at residues Asn104 and Asn152. The interval 138–229 (LHTLQATLGC…SLRNGLQDTG (92 aa)) is alpha-2. The tract at residues 230-323 (PPMVTVTCRN…SIMQTAVSGH (94 aa)) is alpha-3. An Ig-like C1-type domain is found at 231 to 321 (PMVTVTCRNY…NHSIMQTAVS (91 aa)). N-linked (GlcNAc...) asparagine glycosylation occurs at Asn312. Residues 324–329 (AAEDSQ) form a connecting peptide region. Asp330 carries GPI-anchor amidated aspartate lipidation. Residues 331 to 355 (VASSATASAGSALPVVLAVALARAN) constitute a propeptide, removed in mature form.

Belongs to the MHC class I family. In terms of assembly, heterodimer with B2M (beta-2-microglobulin). In terms of processing, N-glycosylated. Ubiquitously expressed in neonatal and adult tissues.

The protein localises to the cell membrane. Binds to heparan sulfate proteoglycans on the surface of fibroblast (NIH-3T3) cells. The sequence is that of MHC class I-like protein MILL2 from Mus musculus (Mouse).